The primary structure comprises 170 residues: Adenine phosphoribosyltransferase (170 aa).

Belongs to the purine/pyrimidine phosphoribosyltransferase family. In terms of assembly, homodimer.

The protein localises to the cytoplasm. It catalyses the reaction AMP + diphosphate = 5-phospho-alpha-D-ribose 1-diphosphate + adenine. It functions in the pathway purine metabolism; AMP biosynthesis via salvage pathway; AMP from adenine: step 1/1. Catalyzes a salvage reaction resulting in the formation of AMP, that is energically less costly than de novo synthesis. The chain is Adenine phosphoribosyltransferase from Streptococcus pneumoniae (strain Taiwan19F-14).